The primary structure comprises 130 residues: Ribonuclease P protein component 2 (130 aa).

This sequence belongs to the eukaryotic/archaeal RNase P protein component 2 family. Consists of a catalytic RNA component and at least 4-5 protein subunits.

It is found in the cytoplasm. It carries out the reaction Endonucleolytic cleavage of RNA, removing 5'-extranucleotides from tRNA precursor.. Functionally, part of ribonuclease P, a protein complex that generates mature tRNA molecules by cleaving their 5'-ends. The polypeptide is Ribonuclease P protein component 2 (Methanococcus maripaludis (strain C6 / ATCC BAA-1332)).